A 149-amino-acid chain; its full sequence is Nucleoside diphosphate kinase 1 (149 aa).

ATP contacts are provided by Lys9, Phe57, Arg85, Thr91, Arg102, and Asn112. The active-site Pros-phosphohistidine intermediate is the His115.

The protein belongs to the NDK family. As to quaternary structure, homohexamer. Mg(2+) is required as a cofactor.

The catalysed reaction is a 2'-deoxyribonucleoside 5'-diphosphate + ATP = a 2'-deoxyribonucleoside 5'-triphosphate + ADP. It carries out the reaction a ribonucleoside 5'-diphosphate + ATP = a ribonucleoside 5'-triphosphate + ADP. Functionally, major role in the synthesis of nucleoside triphosphates other than ATP. The ATP gamma phosphate is transferred to the NDP beta phosphate via a ping-pong mechanism, using a phosphorylated active-site intermediate. This NDK is microtubule-associated. This is Nucleoside diphosphate kinase 1 (NDKR) from Oryza sativa subsp. japonica (Rice).